The following is a 206-amino-acid chain: Adenylate kinase (206 aa).

10–15 provides a ligand contact to ATP; the sequence is GAGKGT. The segment at 30 to 59 is NMP; the sequence is STGDILREAVQKGTPLGKKAKEYMERGELV. AMP contacts are provided by residues threonine 31, 57–59, 82–85, and glutamine 89; these read ELV and GFPR. ATP is bound by residues arginine 120, arginine 124, and 133–134; that span reads VY. The segment at 123 to 153 is LID; sequence GRRINPETGEVYHVKYNPPPPGVKVIQREDD. Arginine 161 lines the AMP pocket. Lysine 189 lines the ATP pocket.

The protein belongs to the adenylate kinase family. Monomer.

Its subcellular location is the cytoplasm. It catalyses the reaction AMP + ATP = 2 ADP. It functions in the pathway purine metabolism; AMP biosynthesis via salvage pathway; AMP from ADP: step 1/1. Its function is as follows. Catalyzes the reversible transfer of the terminal phosphate group between ATP and AMP. Plays an important role in cellular energy homeostasis and in adenine nucleotide metabolism. The chain is Adenylate kinase from Aquifex aeolicus (strain VF5).